The following is a 233-amino-acid chain: MILIASPFSLAHLEYLNTWHANIKNIAQQHGLDIKVAIVVSKTHLNNFLPFSTALNIECITFPGCGIKEIDLLWARIKLFQHYCAIGARLLWLVSADIRPSVSTWPAIADSLKKGADAVVVPYPSQWNNLIPTVIKEIVVHQKKCLVAVDAHHLDTDTQIVGAGMGCIVLTLKALMVRLSIGKQPIKILWPDLHGTAEGIPLEGVEVGWFLNAYAHKLNIRCLGAEHIAQHLN.

Belongs to the asfivirus H233R family.

This is an uncharacterized protein from African swine fever virus (isolate Tick/Malawi/Lil 20-1/1983) (ASFV).